Here is an 804-residue protein sequence, read N- to C-terminus: Probable cadmium-transporting ATPase (804 aa).

HMA domains are found at residues 11–74 (DKQV…LKVA) and 89–152 (DKNV…LKVI). Cd(2+) contacts are provided by cysteine 22, cysteine 25, cysteine 100, and cysteine 103. Helical transmembrane passes span 183–203 (STLLFATLLIAFGYLSHFVNG), 207–227 (LVTSMLFVSSIVIGGYSLFKV), 248–268 (IGAAIIGEWAEASIVVILFAI), 413–433 (IIMVIAALVAVVPPLFFGGSW), and 441–461 (LAVLVVGCPCALVITTPISIV). Aspartate 492 (4-aspartylphosphate intermediate) is an active-site residue. The next 2 helical transmembrane spans lie at 749 to 771 (LNIIKANITFAIGIKIIALLLVI) and 776 to 798 (TLWIAILSDMGATILVALNSLRL).

The protein belongs to the cation transport ATPase (P-type) (TC 3.A.3) family. Type IB subfamily.

It localises to the cell membrane. The enzyme catalyses Cd(2+)(in) + ATP + H2O = Cd(2+)(out) + ADP + phosphate + H(+). Functionally, couples the hydrolysis of ATP with the export of cadmium. Involved in cadmium resistance. The protein is Probable cadmium-transporting ATPase (cadA) of Staphylococcus aureus.